We begin with the raw amino-acid sequence, 392 residues long: DNA-directed RNA polymerase subunit Rpo1C (392 aa).

Belongs to the RNA polymerase beta' chain family. Part of the RNA polymerase complex.

It localises to the cytoplasm. The enzyme catalyses RNA(n) + a ribonucleoside 5'-triphosphate = RNA(n+1) + diphosphate. Functionally, DNA-dependent RNA polymerase (RNAP) catalyzes the transcription of DNA into RNA using the four ribonucleoside triphosphates as substrates. Forms part of the jaw domain. The protein is DNA-directed RNA polymerase subunit Rpo1C of Sulfurisphaera tokodaii (strain DSM 16993 / JCM 10545 / NBRC 100140 / 7) (Sulfolobus tokodaii).